The following is a 282-amino-acid chain: HTH-type transcriptional activator RhaR (282 aa).

In terms of domain architecture, HTH araC/xylS-type spans 179-277 (DKLITRLAAS…GMTPSQWRHL (99 aa)). DNA-binding regions (H-T-H motif) lie at residues 196 to 217 (DKFCDEASCSERVLRQQFRQQT) and 244 to 267 (ISDISTECGFEDSNYFSVVFTRET).

Binds DNA as a dimer.

It is found in the cytoplasm. In terms of biological role, activates expression of the rhaSR operon in response to L-rhamnose. This chain is HTH-type transcriptional activator RhaR, found in Escherichia coli O1:K1 / APEC.